The chain runs to 371 residues: MKLLKLAPDVYKFDTAEEFMKYFKVGKGDFILTNEFLYKPFLEKFNDGADAVFQEKYGLGEPSDEMINNIIKDIGDKQYNRIIAVGGGSVIDIAKILSLKYTDDSLDLFEGKVPLVKNKELIIVPTTCGTGSEVTNVSVAELKRRHTKKGIASDELYATYAVLVPEFIKGLPYKFFVTSSVDALIHATEAYVSPNANPYTDMFSVKAMELILNGYMQMVEKGNDYRVEIIEDFVIGSNYAGIAFGNAGVGAVHALSYPIGGNYHVPHGEANYLFFTEIFKTYYEKNPNGKIKDVNKLLAGILKCDESEAYDSLSQLLDKLLSRKPLREYGMKEEEIETFADSVIEGQQRLLVNNYEPFSREDIVNTYKKLY.

NAD(+)-binding positions include 88-92, 126-130, and lysine 148; these read GSVID and TTCGT. Fe cation-binding residues include aspartate 182, histidine 186, histidine 253, and histidine 267. Residue histidine 267 coordinates NAD(+).

The protein belongs to the iron-containing alcohol dehydrogenase family. As to quaternary structure, homodimer. The cofactor is Fe(2+). Cu(2+) serves as cofactor.

It catalyses the reaction 4-hydroxybutanoate + NAD(+) = succinate semialdehyde + NADH + H(+). With respect to regulation, inactivated by oxygen. Its function is as follows. Involved in the anaerobic succinate degradation pathway. Catalyzes the interconversion of gamma-hydroxybutyrate (GHB) and succinic semialdehyde (SSA). This is 4-hydroxybutyrate dehydrogenase from Clostridium kluyveri (strain ATCC 8527 / DSM 555 / NBRC 12016 / NCIMB 10680 / K1).